Here is a 154-residue protein sequence, read N- to C-terminus: Myoglobin (154 aa).

Residues 1–147 (MADVKKNCLA…FNDECQHQLA (147 aa)) form the Globin domain. Position 96 (His96) interacts with heme b.

Belongs to the globin family.

It localises to the cytoplasm. The sequence is that of Myoglobin (GLBB) from Nippostrongylus brasiliensis (Rat hookworm).